The sequence spans 437 residues: Chromosomal replication initiator protein DnaA (437 aa).

Residues 1–67 (MKNKIIASLK…KVVKDILGKD (67 aa)) are domain I, interacts with DnaA modulators. A domain II region spans residues 67–97 (DATYEITFKEIPYETKVESGPLIKKRPLLIT). Residues 98-313 (PLNPKYTFEN…GAILRLIAYR (216 aa)) form a domain III, AAA+ region region. ATP contacts are provided by Gly-141, Gly-143, Lys-144, and Thr-145. Residues 314–437 (NLYGTLNLSI…SKGFAQGESM (124 aa)) form a domain IV, binds dsDNA region.

This sequence belongs to the DnaA family. Oligomerizes as a right-handed, spiral filament on DNA at oriC.

The protein localises to the cytoplasm. Its function is as follows. Plays an essential role in the initiation and regulation of chromosomal replication. ATP-DnaA binds to the origin of replication (oriC) to initiate formation of the DNA replication initiation complex once per cell cycle. Binds the DnaA box (a 9 base pair repeat at the origin) and separates the double-stranded (ds)DNA. Forms a right-handed helical filament on oriC DNA; dsDNA binds to the exterior of the filament while single-stranded (ss)DNA is stabiized in the filament's interior. The ATP-DnaA-oriC complex binds and stabilizes one strand of the AT-rich DNA unwinding element (DUE), permitting loading of DNA polymerase. After initiation quickly degrades to an ADP-DnaA complex that is not apt for DNA replication. Binds acidic phospholipids. The chain is Chromosomal replication initiator protein DnaA from Thermosipho melanesiensis (strain DSM 12029 / CIP 104789 / BI429).